The chain runs to 981 residues: Lateral signaling target protein 2 homolog (981 aa).

A disordered region spans residues 308–462; the sequence is PLGSSSIEAP…LESSDDDTDE (155 aa). Composition is skewed to low complexity over residues 326–356, 369–380, 390–404, and 412–433; these read TTSSSQNNNNSSNNNHSSSSTTTTTMGTTNT, NNHNSNSNSSTN, SPSMLSLSATSTPTA, and PSHSIDSTSSAATSSTNPPADW. Over residues 434–462 the composition is skewed to acidic residues; sequence SDGDDEDEDDDDIEVDEEDLESSDDDTDE. Residues Ser-544 and Ser-545 each carry the phosphoserine modification. 2 disordered regions span residues 561-642 and 749-897; these read EQMQ…SSLS and DNVF…SPPA. Residues 576-611 show a composition bias toward basic residues; it reads HSHRHHQRHHHHHHHRHSHQHRQPHPHRTTRSGRKR. Low complexity predominate over residues 630–642; the sequence is LASGDTSAASSLS. The segment covering 760 to 791 has biased composition (polar residues); the sequence is ATGQRHSAGASMQRNNTIDLASQSGEGSPSGA. Ser-805 carries the phosphoserine modification. Composition is skewed to low complexity over residues 811–866 and 883–896; these read AASS…PVSA and PSSATSTSATLSPP. An FYVE-type zinc finger spans residues 901–961; the sequence is DGKAPRCMAC…VCRDCYVREV (61 aa). Positions 907, 910, 923, 926, 931, 934, 953, and 956 each coordinate Zn(2+).

Belongs to the lst-2 family.

Negative regulator of epidermal growth factor receptor (EGFR) signaling. The chain is Lateral signaling target protein 2 homolog from Drosophila erecta (Fruit fly).